Reading from the N-terminus, the 187-residue chain is Peptide deformylase (187 aa).

Positions 94 and 136 each coordinate Fe cation. E137 is an active-site residue. H140 lines the Fe cation pocket.

The protein belongs to the polypeptide deformylase family. Requires Fe(2+) as cofactor.

The enzyme catalyses N-terminal N-formyl-L-methionyl-[peptide] + H2O = N-terminal L-methionyl-[peptide] + formate. Removes the formyl group from the N-terminal Met of newly synthesized proteins. Requires at least a dipeptide for an efficient rate of reaction. N-terminal L-methionine is a prerequisite for activity but the enzyme has broad specificity at other positions. This is Peptide deformylase from Chlorobaculum parvum (strain DSM 263 / NCIMB 8327) (Chlorobium vibrioforme subsp. thiosulfatophilum).